The chain runs to 530 residues: Proline--tRNA ligase, cytoplasmic (530 aa).

Belongs to the class-II aminoacyl-tRNA synthetase family.

It is found in the cytoplasm. It localises to the cytosol. It carries out the reaction tRNA(Pro) + L-proline + ATP = L-prolyl-tRNA(Pro) + AMP + diphosphate. Functionally, catalyzes the attachment of proline to tRNA(Pro) in a two-step reaction: proline is first activated by ATP to form Pro-AMP and then transferred to the acceptor end of tRNA(Pro). The chain is Proline--tRNA ligase, cytoplasmic from Arabidopsis thaliana (Mouse-ear cress).